We begin with the raw amino-acid sequence, 291 residues long: Elongation factor Ts (291 aa).

Residues 80 to 83 (TDFV) form an involved in Mg(2+) ion dislocation from EF-Tu region.

It belongs to the EF-Ts family.

It localises to the cytoplasm. In terms of biological role, associates with the EF-Tu.GDP complex and induces the exchange of GDP to GTP. It remains bound to the aminoacyl-tRNA.EF-Tu.GTP complex up to the GTP hydrolysis stage on the ribosome. The chain is Elongation factor Ts from Acinetobacter baumannii (strain AB307-0294).